The sequence spans 209 residues: CASP-like protein 1B1 (209 aa).

Over residues Met1–Pro10 the composition is skewed to basic and acidic residues. Residues Met1–Pro39 are disordered. Topologically, residues Met1–Gln49 are cytoplasmic. Over residues Arg19–Ala32 the composition is skewed to low complexity. Residues Pro50–Leu70 form a helical membrane-spanning segment. Over Asp71–Ala100 the chain is Extracellular. Residues Phe101–Val121 form a helical membrane-spanning segment. The Cytoplasmic segment spans residues Arg122–Arg134. A helical membrane pass occupies residues Met135 to Ala155. The Extracellular portion of the chain corresponds to Glu156–Arg180. Residues Gly181–Leu201 form a helical membrane-spanning segment. The Cytoplasmic segment spans residues Ser202–Cys209.

Belongs to the Casparian strip membrane proteins (CASP) family. As to quaternary structure, homodimer and heterodimers.

Its subcellular location is the cell membrane. The polypeptide is CASP-like protein 1B1 (Zea mays (Maize)).